Consider the following 386-residue polypeptide: Trichocyst matrix protein T2-B (386 aa).

The signal sequence occupies residues 1–19; sequence MKTIILALALIALVSSTQS. Positions 20–48 are excised as a propeptide; the sequence is DVIDTIKKIDQSPFGRTLFDTIWLELQTG. The stretch at 51-154 forms a coiled coil; that stretch reads LDRLVSTLTD…AEEHEDFEEK (104 aa). A propeptide spanning residues 184–238 is cleaved from the precursor; that stretch reads KGKAAKQPHKFTKDVANLIQKHFTTSAKKTAKFQHRKGYSKLFKAFATIASKVEQ. Residues 294–325 adopt a coiled-coil conformation; the sequence is ALANAISDLAALNDIIAQVEASLDTTVQRIEN.

The protein belongs to the TMP family.

Its subcellular location is the trichocyst. Functionally, structural protein that crystallize inside the trichocyst matrix. This is Trichocyst matrix protein T2-B (T2B) from Paramecium tetraurelia.